The sequence spans 252 residues: Probable transcriptional regulatory protein Ava_1228 (252 aa).

It belongs to the TACO1 family.

Its subcellular location is the cytoplasm. This chain is Probable transcriptional regulatory protein Ava_1228, found in Trichormus variabilis (strain ATCC 29413 / PCC 7937) (Anabaena variabilis).